Consider the following 92-residue polypeptide: Small ribosomal subunit protein uS15c (92 aa).

This sequence belongs to the universal ribosomal protein uS15 family. Part of the 30S ribosomal subunit.

The protein localises to the plastid. The protein resides in the chloroplast. This chain is Small ribosomal subunit protein uS15c (rps15), found in Carica papaya (Papaya).